An 820-amino-acid chain; its full sequence is Protein O-mannosyl-transferase 2 (820 aa).

A helical membrane pass occupies residues 124 to 144 (AAGWWATLAVVTLLSFATRFH). Asn168 carries N-linked (GlcNAc...) asparagine glycosylation. A run of 5 helical transmembrane segments spans residues 170–190 (TFFF…AGYL), 216–236 (GFCA…VLDL), 261–281 (QYIL…LSMV), 301–321 (LTGI…FIIV), and 353–373 (ILCL…VHVM). Residues Asn376 and Asn400 are each glycosylated (N-linked (GlcNAc...) asparagine). MIR domains follow at residues 404 to 460 (PEHL…IKKY), 473 to 529 (VEFV…IEVV), and 534 to 591 (GNRI…IEEH). Residue Asn515 is glycosylated (N-linked (GlcNAc...) asparagine). N-linked (GlcNAc...) asparagine glycosylation is found at Asn598 and Asn653. 4 helical membrane passes run 659–679 (VYLL…VLYL), 713–733 (LLLG…ILYF), 735–755 (HYFP…DTLL), and 774–794 (VGIL…HPLA).

Belongs to the glycosyltransferase 39 family. In terms of processing, N-glycosylated. Ubiquitous. Highly expressed in the acrosome of cap phase spermatids, in spermatocytes and liver. Isoform 1 seems to be testis-specific.

The protein localises to the endoplasmic reticulum membrane. The enzyme catalyses a di-trans,poly-cis-dolichyl beta-D-mannosyl phosphate + L-seryl-[protein] = 3-O-(alpha-D-mannosyl)-L-seryl-[protein] + a di-trans,poly-cis-dolichyl phosphate + H(+). The catalysed reaction is a di-trans,poly-cis-dolichyl beta-D-mannosyl phosphate + L-threonyl-[protein] = 3-O-(alpha-D-mannosyl)-L-threonyl-[protein] + a di-trans,poly-cis-dolichyl phosphate + H(+). It participates in protein modification; protein glycosylation. Functionally, transfers mannosyl residues to the hydroxyl group of serine or threonine residues. Coexpression of both POMT1 and POMT2 is necessary for enzyme activity, expression of either POMT1 or POMT2 alone is insufficient. Essentially dedicated to O-mannosylation of alpha-DAG1 and few other proteins but not of cadherins and protocaherins. The protein is Protein O-mannosyl-transferase 2 (Pomt2) of Mus musculus (Mouse).